A 183-amino-acid polypeptide reads, in one-letter code: uncharacterized protein (183 aa).

The GGDEF domain maps to P55 to R183.

In terms of biological role, might be involved in pSAM2 replication control. This is an uncharacterized protein from Streptomyces ambofaciens.